A 275-amino-acid polypeptide reads, in one-letter code: Membrane protein insertase YidC (275 aa).

The N-terminal stretch at 1–22 (MKKYKRLLLMAGLVTLVFVLSA) is a signal peptide. The N-palmitoyl cysteine moiety is linked to residue Cys23. Cys23 carries S-diacylglycerol cysteine lipidation. The next 4 membrane-spanning stretches (helical) occupy residues 53-73 (LGGS…IILL), 127-147 (YIGC…YQAI), 169-189 (YLIL…LSSM), and 206-226 (PAMI…YWVV). Residues 249-266 (EEAARQAKARERALERAK) are compositionally biased toward basic and acidic residues. Positions 249–275 (EEAARQAKARERALERAKSPKKKGKKK) are disordered.

This sequence belongs to the OXA1/ALB3/YidC family. Type 2 subfamily.

It localises to the cell membrane. Functionally, required for the insertion and/or proper folding and/or complex formation of integral membrane proteins into the membrane. Involved in integration of membrane proteins that insert both dependently and independently of the Sec translocase complex, as well as at least some lipoproteins. This Enterococcus faecalis (strain ATCC 700802 / V583) protein is Membrane protein insertase YidC.